The chain runs to 333 residues: Holliday junction branch migration complex subunit RuvB (333 aa).

The interval 1 to 181 (MARILDNDLL…FGINGHMEYY (181 aa)) is large ATPase domain (RuvB-L). ATP contacts are provided by residues L20, R21, G62, K65, T66, T67, 128 to 130 (EDY), R171, Y181, and R218. T66 is a binding site for Mg(2+). A presensor-1 beta-hairpin region spans residues 130-148 (YYIDIMIGAGETSRSVHLD). The interval 182–252 (ELPDLTEIVE…IADQALTMLD (71 aa)) is small ATPAse domain (RuvB-S). The head domain (RuvB-H) stretch occupies residues 255–333 (HEGLDYVDQK…HMGYDYTRDN (79 aa)). DNA is bound by residues R291, R310, R312, and R315.

The protein belongs to the RuvB family. In terms of assembly, homohexamer. Forms an RuvA(8)-RuvB(12)-Holliday junction (HJ) complex. HJ DNA is sandwiched between 2 RuvA tetramers; dsDNA enters through RuvA and exits via RuvB. Only 4 subunits contact one DNA strand at any time. Two adjacent subunits are contacted by domain III of RuvA. An RuvB hexamer assembles on each DNA strand where it exits the tetramer. Each RuvB hexamer is contacted by two RuvA subunits (via domain III) on 2 adjacent RuvB subunits; this complex drives branch migration. In the full resolvosome a probable DNA-RuvA(4)-RuvB(12)-RuvC(2) complex forms which resolves the HJ.

The protein resides in the cytoplasm. The catalysed reaction is ATP + H2O = ADP + phosphate + H(+). With respect to regulation, binding of domain III of RuvA to a single subunit of the RuvB hexamer activates the ATPase 2 subunits away and nucleotide exchange in the adjacent subunit. The RuvA-RuvB-RuvC complex processes Holliday junction (HJ) DNA during genetic recombination and DNA repair, while the RuvA-RuvB complex plays an important role in the rescue of blocked DNA replication forks via replication fork reversal (RFR). Catalyzes branch migration on Holliday junction (HJ) DNA in complex with RuvA from S.typhimurim and ATP. RuvA specifically binds to HJ cruciform DNA, conferring on it an open structure. The RuvB hexamer acts as an ATP-dependent pump, pulling dsDNA into and through the RuvAB complex. Forms 2 homohexamers on either side of HJ DNA bound by 1 or 2 RuvA tetramers; 4 subunits per hexamer contact DNA at a time. Coordinated motions by a converter formed by DNA-disengaged RuvB subunits stimulates ATP hydrolysis and nucleotide exchange. Immobilization of the converter enables RuvB to convert the ATP-contained energy into a lever motion, pulling 2 nucleotides of DNA out of the RuvA tetramer per ATP hydrolyzed, thus driving DNA branch migration. The RuvB motors rotate together with the DNA substrate, which together with the progressing nucleotide cycle forms the mechanistic basis for DNA recombination by continuous branch migration. Branch migration allows RuvC to scan DNA until it finds its consensus sequence, where it cleaves and resolves cruciform DNA. This is Holliday junction branch migration complex subunit RuvB from Streptococcus thermophilus (strain ATCC BAA-250 / LMG 18311).